The primary structure comprises 405 residues: L-carnitine CoA-transferase (405 aa).

The CoA site is built by lysine 97 and arginine 104. Aspartate 169 (nucleophile) is an active-site residue.

It belongs to the CoA-transferase III family. CaiB subfamily. In terms of assembly, homodimer.

Its subcellular location is the cytoplasm. It catalyses the reaction crotonobetainyl-CoA + (R)-carnitine = crotonobetaine + (R)-carnitinyl-CoA. The catalysed reaction is 4-(trimethylamino)butanoyl-CoA + (R)-carnitine = (R)-carnitinyl-CoA + 4-(trimethylamino)butanoate. The protein operates within amine and polyamine metabolism; carnitine metabolism. Catalyzes the reversible transfer of the CoA moiety from gamma-butyrobetainyl-CoA to L-carnitine to generate L-carnitinyl-CoA and gamma-butyrobetaine. Is also able to catalyze the reversible transfer of the CoA moiety from gamma-butyrobetainyl-CoA or L-carnitinyl-CoA to crotonobetaine to generate crotonobetainyl-CoA. The sequence is that of L-carnitine CoA-transferase from Salmonella gallinarum (strain 287/91 / NCTC 13346).